A 364-amino-acid chain; its full sequence is Solute carrier family 35 member C2 (364 aa).

The next 2 membrane-spanning stretches (helical) occupy residues 14-34 and 42-62; these read AALT…ITFY and FHFP…FSAL. An N-linked (GlcNAc...) asparagine glycan is attached at Asn102. 7 helical membrane passes run 104-124, 136-156, 166-186, 202-222, 238-258, 272-292, and 295-315; these read SFLY…VLFI, LRAA…MFTY, FALV…TQIL, FHLQ…FEGL, LLLW…GLGF, LSIA…HLLG, and ISLL…LHVA. Phosphoserine is present on residues Ser335 and Ser336.

It belongs to the TPT transporter family. SLC35C subfamily.

Its subcellular location is the golgi apparatus. The protein localises to the cis-Golgi network membrane. The protein resides in the endoplasmic reticulum-Golgi intermediate compartment membrane. In terms of biological role, may play an important role in the cellular response to tissue hypoxia. May be either a GDP-fucose transporter that competes with SLC35C1 for GDP-fucose, or a factor that otherwise enhances the fucosylation of Notch and is required for optimal Notch signaling in mammalian cells. In Mus musculus (Mouse), this protein is Solute carrier family 35 member C2 (Slc35c2).